The chain runs to 99 residues: Co-chaperonin GroES (99 aa).

The protein belongs to the GroES chaperonin family. Heptamer of 7 subunits arranged in a ring. Interacts with the chaperonin GroEL.

The protein resides in the cytoplasm. In terms of biological role, together with the chaperonin GroEL, plays an essential role in assisting protein folding. The GroEL-GroES system forms a nano-cage that allows encapsulation of the non-native substrate proteins and provides a physical environment optimized to promote and accelerate protein folding. GroES binds to the apical surface of the GroEL ring, thereby capping the opening of the GroEL channel. This is Co-chaperonin GroES from Corynebacterium jeikeium (strain K411).